We begin with the raw amino-acid sequence, 150 residues long: Depactin (150 aa).

The ADF-H domain maps to 3-148; the sequence is SGTALDENVK…SEEAIGDKIK (146 aa).

Belongs to the actin-binding proteins ADF family.

Functionally, depactin interacts with actin at some of its 12 N-terminal residues and 20 C-terminal residues. Binds to actin monomers from filaments and in solution. This Asterias amurensis (Northern Pacific seastar) protein is Depactin.